A 131-amino-acid chain; its full sequence is Small ribosomal subunit protein uS8 (131 aa).

The protein belongs to the universal ribosomal protein uS8 family. In terms of assembly, part of the 30S ribosomal subunit. Contacts proteins S5 and S12.

In terms of biological role, one of the primary rRNA binding proteins, it binds directly to 16S rRNA central domain where it helps coordinate assembly of the platform of the 30S subunit. The chain is Small ribosomal subunit protein uS8 from Paraburkholderia phymatum (strain DSM 17167 / CIP 108236 / LMG 21445 / STM815) (Burkholderia phymatum).